The primary structure comprises 262 residues: Acyl-coenzyme A diphosphatase FITM2 (262 aa).

The Cytoplasmic segment spans residues 1–23 (MEHLERCAWVLRGTLVRSAVRKY). A helical membrane pass occupies residues 24 to 44 (LPWALAASMLAGSLLKELSPL). Topologically, residues 45–57 (PESYLSNKRNVLN) are lumenal. Residues 58 to 78 (VYFVKVAWAWTFCLLLPFIAL) form a helical membrane-spanning segment. Over 79 to 93 (TNYHLTGKAGLVLRR) the chain is Cytoplasmic. A helical membrane pass occupies residues 94–114 (LSTLLVGTAIWYVCTAIFSNI). Over 115–145 (EHYTGSCYQSPALEGERKEHQSKQQCHGEGG) the chain is Lumenal. A helical membrane pass occupies residues 146–166 (FWHGFDISGHSFLLTFCALMI). Residue histidine 155 is part of the active site. Over 167-190 (VEEMAVLHEVKTDRNHCLHAAITT) the chain is Cytoplasmic. A helical membrane pass occupies residues 191–211 (LVVALGFLTFIWVWMFLCTAV). Over 212–218 (YFHNLSQ) the chain is Lumenal. Histidine 214 is an active-site residue. The helical transmembrane segment at 219–239 (KVFGTLFGLLGWYGTYGCWYL) threads the bilayer. Residues 240–262 (KSFSPGLPPQSSSLNLKQDTYKK) lie on the Cytoplasmic side of the membrane.

Belongs to the FIT family. FIT2 subfamily.

Its subcellular location is the endoplasmic reticulum membrane. The enzyme catalyses an acyl-CoA + H2O = an acyl-4'-phosphopantetheine + adenosine 3',5'-bisphosphate + 2 H(+). It catalyses the reaction (9Z)-octadecenoyl-CoA + H2O = S-(9Z-octadecenoyl)-4'-phosphopantetheine + adenosine 3',5'-bisphosphate + 2 H(+). The catalysed reaction is (5Z,8Z,11Z,14Z)-eicosatetraenoyl-CoA + H2O = S-(5Z,8Z,11Z,14Z-eicosatetraenoyl)-4'-phosphopantetheine + adenosine 3',5'-bisphosphate + 2 H(+). It carries out the reaction hexadecanoyl-CoA + H2O = S-hexadecanoyl-4'-phosphopantetheine + adenosine 3',5'-bisphosphate + 2 H(+). In terms of biological role, fatty acyl-coenzyme A (CoA) diphosphatase that hydrolyzes fatty acyl-CoA to yield acyl-4'-phosphopantetheine and adenosine 3',5'-bisphosphate. Preferentially hydrolyzes unsaturated long-chain acyl-CoA substrates such as oleoyl-CoA/(9Z)-octadecenoyl-CoA and arachidonoyl-CoA/(5Z,8Z,11Z,14Z)-eicosatetraenoyl-CoA in the endoplasmic reticulum (ER) lumen. This catalytic activity is required for maintaining ER structure and for lipid droplets (LDs) biogenesis, which are lipid storage organelles involved in maintaining lipid and energy homeostasis. Directly binds to diacylglycerol (DAGs) and triacylglycerol, which is also important for LD biogenesis. May support directional budding of nacent LDs from the ER into the cytosol by reducing DAG levels at sites of LD formation. Plays a role in the regulation of cell morphology and cytoskeletal organization. The protein is Acyl-coenzyme A diphosphatase FITM2 of Bos taurus (Bovine).